Consider the following 208-residue polypeptide: Small ribosomal subunit protein uS4 (208 aa).

In terms of domain architecture, S4 RNA-binding spans T95 to E159.

This sequence belongs to the universal ribosomal protein uS4 family. In terms of assembly, part of the 30S ribosomal subunit. Contacts protein S5. The interaction surface between S4 and S5 is involved in control of translational fidelity.

One of the primary rRNA binding proteins, it binds directly to 16S rRNA where it nucleates assembly of the body of the 30S subunit. Its function is as follows. With S5 and S12 plays an important role in translational accuracy. This Borreliella afzelii (strain PKo) (Borrelia afzelii) protein is Small ribosomal subunit protein uS4.